A 98-amino-acid polypeptide reads, in one-letter code: Putative septation protein SpoVG (98 aa).

This sequence belongs to the SpoVG family.

Its function is as follows. Essential for sporulation. Interferes with or is a negative regulator of the pathway leading to asymmetric septation. This is Putative septation protein SpoVG from Bacillus pumilus (strain SAFR-032).